A 360-amino-acid chain; its full sequence is Arginase, non-hepatic 2 (360 aa).

Mn(2+)-binding residues include H122, D145, H147, and D149. Residues 147–151 (HADIN), 158–160 (SGN), and D204 each bind substrate. Mn(2+) contacts are provided by D253 and D255. 2 residues coordinate substrate: T267 and E298.

The protein belongs to the arginase family. Homotrimer. Mn(2+) is required as a cofactor. As to expression, expressed at differing tadpole stages in tail, intestine, hindlimb and trunk region. Strongest in tadpole tail.

It carries out the reaction L-arginine + H2O = urea + L-ornithine. The protein operates within nitrogen metabolism; urea cycle; L-ornithine and urea from L-arginine: step 1/1. As well as its role in the urea cycle, may be involved in tissue remodeling. This is Arginase, non-hepatic 2 (arg2-b) from Xenopus laevis (African clawed frog).